A 429-amino-acid chain; its full sequence is Phosphomethylpyrimidine synthase (429 aa).

Substrate contacts are provided by residues asparagine 66, methionine 95, tyrosine 124, histidine 163, 185–187, 226–229, and glutamate 265; these read SRG and DAMR. Histidine 269 is a Zn(2+) binding site. Tyrosine 292 contacts substrate. Residue histidine 333 participates in Zn(2+) binding. Residues cysteine 409, cysteine 412, and cysteine 416 each contribute to the [4Fe-4S] cluster site.

The protein belongs to the ThiC family. [4Fe-4S] cluster serves as cofactor.

The enzyme catalyses 5-amino-1-(5-phospho-beta-D-ribosyl)imidazole + S-adenosyl-L-methionine = 4-amino-2-methyl-5-(phosphooxymethyl)pyrimidine + CO + 5'-deoxyadenosine + formate + L-methionine + 3 H(+). Its pathway is cofactor biosynthesis; thiamine diphosphate biosynthesis. In terms of biological role, catalyzes the synthesis of the hydroxymethylpyrimidine phosphate (HMP-P) moiety of thiamine from aminoimidazole ribotide (AIR) in a radical S-adenosyl-L-methionine (SAM)-dependent reaction. In Methanopyrus kandleri (strain AV19 / DSM 6324 / JCM 9639 / NBRC 100938), this protein is Phosphomethylpyrimidine synthase.